A 221-amino-acid chain; its full sequence is Serine protease inhibitor 7 (221 aa).

The N-terminal stretch at 1 to 22 (MKCLFLLCLCLVPIVVFSSTFT) is a signal peptide. A propeptide spanning residues 23 to 28 (SKNPIN) is cleaved from the precursor. A Vacuolar targeting signal motif is present at residues 25–30 (NPINLP). Cystine bridges form between Cys-76–Cys-125 and Cys-174–Cys-191.

This sequence belongs to the protease inhibitor I3 (leguminous Kunitz-type inhibitor) family. In terms of tissue distribution, tubers. Not detected in root, stem, leaves or flower bud.

The protein localises to the vacuole. Inhibitor of trypsin (serine protease). May protect the plant by inhibiting proteases of invading organisms. This Solanum tuberosum (Potato) protein is Serine protease inhibitor 7.